We begin with the raw amino-acid sequence, 368 residues long: Phenylalanine--tRNA ligase alpha subunit (368 aa).

Mg(2+) is bound at residue E268.

It belongs to the class-II aminoacyl-tRNA synthetase family. Phe-tRNA synthetase alpha subunit type 1 subfamily. In terms of assembly, tetramer of two alpha and two beta subunits. Requires Mg(2+) as cofactor.

The protein localises to the cytoplasm. It carries out the reaction tRNA(Phe) + L-phenylalanine + ATP = L-phenylalanyl-tRNA(Phe) + AMP + diphosphate + H(+). This is Phenylalanine--tRNA ligase alpha subunit from Nitrobacter hamburgensis (strain DSM 10229 / NCIMB 13809 / X14).